We begin with the raw amino-acid sequence, 368 residues long: Phospho-N-acetylmuramoyl-pentapeptide-transferase (368 aa).

Helical transmembrane passes span 30–50 (AAAI…IRYL), 72–92 (LPTM…LLWS), 98–118 (HVWL…IDDY), 139–159 (VALG…SVLM), 170–190 (LTID…TALS), 208–228 (AIVV…VYAT), 238–258 (GGEI…FLWF), 264–286 (EIFM…ALLI), and 345–365 (KIVI…LMTL).

This sequence belongs to the glycosyltransferase 4 family. MraY subfamily. Mg(2+) is required as a cofactor.

Its subcellular location is the cell inner membrane. It catalyses the reaction UDP-N-acetyl-alpha-D-muramoyl-L-alanyl-gamma-D-glutamyl-meso-2,6-diaminopimeloyl-D-alanyl-D-alanine + di-trans,octa-cis-undecaprenyl phosphate = di-trans,octa-cis-undecaprenyl diphospho-N-acetyl-alpha-D-muramoyl-L-alanyl-D-glutamyl-meso-2,6-diaminopimeloyl-D-alanyl-D-alanine + UMP. It functions in the pathway cell wall biogenesis; peptidoglycan biosynthesis. Functionally, catalyzes the initial step of the lipid cycle reactions in the biosynthesis of the cell wall peptidoglycan: transfers peptidoglycan precursor phospho-MurNAc-pentapeptide from UDP-MurNAc-pentapeptide onto the lipid carrier undecaprenyl phosphate, yielding undecaprenyl-pyrophosphoryl-MurNAc-pentapeptide, known as lipid I. The polypeptide is Phospho-N-acetylmuramoyl-pentapeptide-transferase (Chlorobium luteolum (strain DSM 273 / BCRC 81028 / 2530) (Pelodictyon luteolum)).